A 362-amino-acid polypeptide reads, in one-letter code: Probable aromatic amino acid hydroxylase (362 aa).

Residues H200 and H205 each coordinate Fe cation.

Belongs to the biopterin-dependent aromatic amino acid hydroxylase family. Requires Fe(2+) as cofactor.

This is Probable aromatic amino acid hydroxylase from Chlamydia pneumoniae (Chlamydophila pneumoniae).